The following is a 449-amino-acid chain: Phosphomannomutase (449 aa).

Serine 97 serves as the catalytic Phosphoserine intermediate. 4 residues coordinate Mg(2+): serine 97, aspartate 237, aspartate 239, and aspartate 241.

Belongs to the phosphohexose mutase family. The cofactor is Mg(2+).

The catalysed reaction is alpha-D-mannose 1-phosphate = D-mannose 6-phosphate. It functions in the pathway amino-acid biosynthesis. Its function is as follows. Catalyzes the formation of mannose-1-P from mannose-6-P. Can also use glucose-6-P. This chain is Phosphomannomutase (manB), found in Methanocaldococcus jannaschii (strain ATCC 43067 / DSM 2661 / JAL-1 / JCM 10045 / NBRC 100440) (Methanococcus jannaschii).